The following is a 231-amino-acid chain: uncharacterized protein (231 aa).

The segment covering 1-10 (MDGKKREVEN) has biased composition (basic and acidic residues). The segment at 1–35 (MDGKKREVENGKNGNNIKDGNSSNTTNYGKDTKTT) is disordered. The segment covering 11–24 (GKNGNNIKDGNSSN) has biased composition (low complexity). The segment covering 25–35 (TTNYGKDTKTT) has biased composition (polar residues).

This is an uncharacterized protein from Aquifex aeolicus (strain VF5).